A 451-amino-acid polypeptide reads, in one-letter code: UDP-N-acetylmuramoylalanine--D-glutamate ligase (451 aa).

119–125 (GSNGKTT) lines the ATP pocket.

Belongs to the MurCDEF family.

It is found in the cytoplasm. The catalysed reaction is UDP-N-acetyl-alpha-D-muramoyl-L-alanine + D-glutamate + ATP = UDP-N-acetyl-alpha-D-muramoyl-L-alanyl-D-glutamate + ADP + phosphate + H(+). Its pathway is cell wall biogenesis; peptidoglycan biosynthesis. Its function is as follows. Cell wall formation. Catalyzes the addition of glutamate to the nucleotide precursor UDP-N-acetylmuramoyl-L-alanine (UMA). In Geobacillus sp. (strain WCH70), this protein is UDP-N-acetylmuramoylalanine--D-glutamate ligase.